Reading from the N-terminus, the 109-residue chain is Hainantoxin-XVIII-2 (109 aa).

Residues 1 to 18 (MKLSIIIIATSLVIAVVA) form the signal peptide. Positions 19–46 (FPSKDSKAIENDKTEQRMEIVVQETARA) are excised as a propeptide. 3 cysteine pairs are disulfide-bonded: cysteine 47-cysteine 62, cysteine 59-cysteine 108, and cysteine 61-cysteine 81.

The protein belongs to the neurotoxin 25 family. F7 subfamily. In terms of tissue distribution, expressed by the venom gland.

The protein localises to the secreted. Functionally, putative ion channel inhibitor. This Cyriopagopus hainanus (Chinese bird spider) protein is Hainantoxin-XVIII-2.